Consider the following 715-residue polypeptide: Coiled-coil domain-containing protein 13 (715 aa).

2 coiled-coil regions span residues 16–105 and 134–458; these read KAMQ…KERD and ATKI…NVHY. The segment at 20–65 is disordered; sequence EMQHKRLQKQMEKKREKELSLKSRADDQEEPLEVSDGLSLLHAGEP. Residues 28–45 show a composition bias toward basic and acidic residues; sequence KQMEKKREKELSLKSRAD. A phosphoserine mark is found at Ser258, Ser469, and Ser536. Disordered stretches follow at residues 482–541 and 607–645; these read EDPG…EQKG and LEPGKASASQRAAPRTKTGLPTSNNRHNPTGSEKKDPSF. Residues 554–608 are a coiled coil; it reads QAAEVERDRLTEFVTVLQKRVEESNSKLLESERKLQEERHRTVVLEQHLEKIRLE. Positions 625 to 637 are enriched in polar residues; it reads GLPTSNNRHNPTG. A coiled-coil region spans residues 653-683; that stretch reads VESQMEELTTRLAIQVEENEMLKAALGSALR.

In terms of assembly, interacts with PCM1, CEP290 and PCNT.

The protein localises to the cytoplasm. Its subcellular location is the cytoskeleton. The protein resides in the microtubule organizing center. It localises to the centrosome. It is found in the centriolar satellite. The protein localises to the cilium basal body. Required for primary cilia formation and promotes the localization of the ciliopathy protein BBS4 to both centriolar satellites and cilia. In Homo sapiens (Human), this protein is Coiled-coil domain-containing protein 13.